The primary structure comprises 136 residues: Large ribosomal subunit protein bL20 (136 aa).

Belongs to the bacterial ribosomal protein bL20 family.

In terms of biological role, binds directly to 23S ribosomal RNA and is necessary for the in vitro assembly process of the 50S ribosomal subunit. It is not involved in the protein synthesizing functions of that subunit. The protein is Large ribosomal subunit protein bL20 of Tropheryma whipplei (strain TW08/27) (Whipple's bacillus).